Consider the following 322-residue polypeptide: ATP-dependent 6-phosphofructokinase (322 aa).

Gly-11 provides a ligand contact to ATP. 21 to 25 (RAVVR) contributes to the ADP binding site. Residues 72–73 (RC) and 102–105 (GDGS) contribute to the ATP site. Asp-103 contacts Mg(2+). Position 127–129 (127–129 (TID)) interacts with substrate. The active-site Proton acceptor is the Asp-129. An ADP-binding site is contributed by Arg-156. Substrate-binding positions include Arg-164 and 171–173 (MGR). ADP contacts are provided by residues 187–189 (GAE), Arg-213, and 215–217 (KKH). Substrate contacts are provided by residues Glu-224, Arg-245, and 251-254 (HVQR).

Belongs to the phosphofructokinase type A (PFKA) family. ATP-dependent PFK group I subfamily. Prokaryotic clade 'B1' sub-subfamily. In terms of assembly, homotetramer. Requires Mg(2+) as cofactor.

The protein localises to the cytoplasm. The enzyme catalyses beta-D-fructose 6-phosphate + ATP = beta-D-fructose 1,6-bisphosphate + ADP + H(+). It participates in carbohydrate degradation; glycolysis; D-glyceraldehyde 3-phosphate and glycerone phosphate from D-glucose: step 3/4. Its activity is regulated as follows. Allosterically activated by ADP and other diphosphonucleosides, and allosterically inhibited by phosphoenolpyruvate. Its function is as follows. Catalyzes the phosphorylation of D-fructose 6-phosphate to fructose 1,6-bisphosphate by ATP, the first committing step of glycolysis. The chain is ATP-dependent 6-phosphofructokinase from Staphylococcus aureus (strain MRSA252).